The chain runs to 214 residues: Dual specificity phosphatase 29 (214 aa).

A Tyrosine-protein phosphatase domain is found at 46 to 194 (HVNEVWPNLY…LRELDIELAL (149 aa)). A substrate-binding site is contributed by 138–145 (HCAMGRSR). The Phosphocysteine intermediate role is filled by cysteine 139.

This sequence belongs to the protein-tyrosine phosphatase family. Non-receptor class dual specificity subfamily.

The protein resides in the cytoplasm. It localises to the nucleus. It carries out the reaction O-phospho-L-tyrosyl-[protein] + H2O = L-tyrosyl-[protein] + phosphate. The catalysed reaction is O-phospho-L-seryl-[protein] + H2O = L-seryl-[protein] + phosphate. The enzyme catalyses O-phospho-L-threonyl-[protein] + H2O = L-threonyl-[protein] + phosphate. Functionally, dual specificity phosphatase able to dephosphorylate phosphotyrosine, phosphoserine and phosphothreonine residues within the same substrate, with a preference for phosphotyrosine as a substrate. Involved in the modulation of AMPK and MAPK1/2 signaling pathways. The polypeptide is Dual specificity phosphatase 29 (DUSP29) (Gallus gallus (Chicken)).